We begin with the raw amino-acid sequence, 331 residues long: Pantothenate kinase (331 aa).

109 to 116 (GSVAVGKS) provides a ligand contact to ATP.

It belongs to the prokaryotic pantothenate kinase family.

The protein localises to the cytoplasm. It catalyses the reaction (R)-pantothenate + ATP = (R)-4'-phosphopantothenate + ADP + H(+). Its pathway is cofactor biosynthesis; coenzyme A biosynthesis; CoA from (R)-pantothenate: step 1/5. In Rhizobium johnstonii (strain DSM 114642 / LMG 32736 / 3841) (Rhizobium leguminosarum bv. viciae), this protein is Pantothenate kinase.